Reading from the N-terminus, the 180-residue chain is Endoribonuclease YbeY (180 aa).

The Zn(2+) site is built by His-136, His-140, and His-146.

Belongs to the endoribonuclease YbeY family. Requires Zn(2+) as cofactor.

It localises to the cytoplasm. Its function is as follows. Single strand-specific metallo-endoribonuclease involved in late-stage 70S ribosome quality control and in maturation of the 3' terminus of the 16S rRNA. The protein is Endoribonuclease YbeY of Synechococcus sp. (strain CC9902).